The sequence spans 357 residues: DNA replication and repair protein RecF (357 aa).

30–37 (GANGSGKT) is an ATP binding site.

This sequence belongs to the RecF family.

Its subcellular location is the cytoplasm. Functionally, the RecF protein is involved in DNA metabolism; it is required for DNA replication and normal SOS inducibility. RecF binds preferentially to single-stranded, linear DNA. It also seems to bind ATP. The protein is DNA replication and repair protein RecF of Klebsiella pneumoniae subsp. pneumoniae (strain ATCC 700721 / MGH 78578).